A 475-amino-acid chain; its full sequence is Cobyric acid synthase (475 aa).

In terms of domain architecture, GATase cobBQ-type spans 244-431 (KLNVVVPVLT…LHGFFDEADV (188 aa)). Cysteine 325 serves as the catalytic Nucleophile. Residue histidine 423 is part of the active site.

The protein belongs to the CobB/CobQ family. CobQ subfamily.

It functions in the pathway cofactor biosynthesis; adenosylcobalamin biosynthesis. Its function is as follows. Catalyzes amidations at positions B, D, E, and G on adenosylcobyrinic A,C-diamide. NH(2) groups are provided by glutamine, and one molecule of ATP is hydrogenolyzed for each amidation. In Vibrio campbellii (strain ATCC BAA-1116), this protein is Cobyric acid synthase.